Consider the following 436-residue polypeptide: UDP-N-acetylglucosamine 1-carboxyvinyltransferase 1 (436 aa).

22-23 is a phosphoenolpyruvate binding site; it reads KN. Residue R93 coordinates UDP-N-acetyl-alpha-D-glucosamine. C117 acts as the Proton donor in catalysis. The residue at position 117 (C117) is a 2-(S-cysteinyl)pyruvic acid O-phosphothioketal. UDP-N-acetyl-alpha-D-glucosamine-binding positions include 122 to 126, D306, and V328; that span reads RPIDQ.

Belongs to the EPSP synthase family. MurA subfamily.

It localises to the cytoplasm. It catalyses the reaction phosphoenolpyruvate + UDP-N-acetyl-alpha-D-glucosamine = UDP-N-acetyl-3-O-(1-carboxyvinyl)-alpha-D-glucosamine + phosphate. It functions in the pathway cell wall biogenesis; peptidoglycan biosynthesis. Cell wall formation. Adds enolpyruvyl to UDP-N-acetylglucosamine. Essential for cell growth. This is UDP-N-acetylglucosamine 1-carboxyvinyltransferase 1 from Bacillus subtilis (strain 168).